The sequence spans 291 residues: 2-C-methyl-D-erythritol 4-phosphate cytidylyltransferase (291 aa).

The tract at residues 1–23 (MTERDFDTPVETPTVQPAPAQGT) is disordered.

This sequence belongs to the IspD/TarI cytidylyltransferase family. IspD subfamily.

The catalysed reaction is 2-C-methyl-D-erythritol 4-phosphate + CTP + H(+) = 4-CDP-2-C-methyl-D-erythritol + diphosphate. Its pathway is isoprenoid biosynthesis; isopentenyl diphosphate biosynthesis via DXP pathway; isopentenyl diphosphate from 1-deoxy-D-xylulose 5-phosphate: step 2/6. Catalyzes the formation of 4-diphosphocytidyl-2-C-methyl-D-erythritol from CTP and 2-C-methyl-D-erythritol 4-phosphate (MEP). The polypeptide is 2-C-methyl-D-erythritol 4-phosphate cytidylyltransferase (Bifidobacterium longum subsp. infantis (strain ATCC 15697 / DSM 20088 / JCM 1222 / NCTC 11817 / S12)).